The chain runs to 343 residues: Large ribosomal subunit protein uL3 (343 aa).

Disordered stretches follow at residues 1–31 and 238–262; these read MGHR…TPRS and KGSR…PGQM.

The protein belongs to the universal ribosomal protein uL3 family. Part of the 50S ribosomal subunit. Forms a cluster with proteins L14 and L24e.

One of the primary rRNA binding proteins, it binds directly near the 3'-end of the 23S rRNA, where it nucleates assembly of the 50S subunit. The protein is Large ribosomal subunit protein uL3 of Sulfurisphaera tokodaii (strain DSM 16993 / JCM 10545 / NBRC 100140 / 7) (Sulfolobus tokodaii).